The chain runs to 457 residues: GTPase Era, mitochondrial (457 aa).

A mitochondrion-targeting transit peptide spans M1–R18. One can recognise an Era-type G domain in the interval K107–G350. Positions G115–S122 are G1. G115–S122 provides a ligand contact to GTP. Residues H141–A145 are G2. A G3 region spans residues D162–G165. GTP-binding positions include D162–L166 and N231–D234. Residues N231–D234 form a G4 region. Over residues A270–G290 the composition is skewed to basic and acidic residues. The tract at residues A270–E300 is disordered. Positions V328–A330 are G5. One can recognise a KH type-2 domain in the interval L376–N457.

This sequence belongs to the TRAFAC class TrmE-Era-EngA-EngB-Septin-like GTPase superfamily. Era GTPase family.

The protein resides in the mitochondrion matrix. Its subcellular location is the mitochondrion inner membrane. Its function is as follows. Probable GTPase that plays a role in the mitochondrial ribosomal small subunit assembly. Specifically binds the 12S mitochondrial rRNA (12S mt-rRNA) to a 33 nucleotide section delineating the 3' terminal stem-loop region. May act as a chaperone that protects the 12S mt-rRNA on the 28S mitoribosomal subunit during ribosomal small subunit assembly. This Salmo salar (Atlantic salmon) protein is GTPase Era, mitochondrial (eral1).